The following is a 442-amino-acid chain: tRNA-2-methylthio-N(6)-dimethylallyladenosine synthase (442 aa).

Residues 6–122 (RKFYIHTFGC…LPVLIAEAGK (117 aa)) form the MTTase N-terminal domain. Positions 15, 51, 85, 157, 161, and 164 each coordinate [4Fe-4S] cluster. The Radical SAM core domain occupies 143-373 (RTQSLTAFVP…IDLQNGISAE (231 aa)). In terms of domain architecture, TRAM spans 376–439 (RLAIGSVVEV…SATLIGRAAE (64 aa)).

This sequence belongs to the methylthiotransferase family. MiaB subfamily. As to quaternary structure, monomer. [4Fe-4S] cluster is required as a cofactor.

The protein resides in the cytoplasm. It carries out the reaction N(6)-dimethylallyladenosine(37) in tRNA + (sulfur carrier)-SH + AH2 + 2 S-adenosyl-L-methionine = 2-methylsulfanyl-N(6)-dimethylallyladenosine(37) in tRNA + (sulfur carrier)-H + 5'-deoxyadenosine + L-methionine + A + S-adenosyl-L-homocysteine + 2 H(+). In terms of biological role, catalyzes the methylthiolation of N6-(dimethylallyl)adenosine (i(6)A), leading to the formation of 2-methylthio-N6-(dimethylallyl)adenosine (ms(2)i(6)A) at position 37 in tRNAs that read codons beginning with uridine. The sequence is that of tRNA-2-methylthio-N(6)-dimethylallyladenosine synthase from Chlorobium limicola (strain DSM 245 / NBRC 103803 / 6330).